We begin with the raw amino-acid sequence, 207 residues long: Small ribosomal subunit protein uS4 (207 aa).

An S4 RNA-binding domain is found at 97–160 (SRLDNVVYRM…KKQARIVEAL (64 aa)).

This sequence belongs to the universal ribosomal protein uS4 family. Part of the 30S ribosomal subunit. Contacts protein S5. The interaction surface between S4 and S5 is involved in control of translational fidelity.

Functionally, one of the primary rRNA binding proteins, it binds directly to 16S rRNA where it nucleates assembly of the body of the 30S subunit. In terms of biological role, with S5 and S12 plays an important role in translational accuracy. This Burkholderia mallei (strain NCTC 10247) protein is Small ribosomal subunit protein uS4.